Consider the following 448-residue polypeptide: Probable protein phosphatase 2C 74 (448 aa).

The tract at residues 1–48 (MGSCLSSSGGGGSRRSLHGSPHVPGPGRRKRPPKRRPGSCSSSFDNTE) is disordered. Residue Gly-2 is the site of N-myristoyl glycine attachment. Residues 27 to 37 (GRRKRPPKRRP) show a composition bias toward basic residues. A PPM-type phosphatase domain is found at 67-384 (TVSLFSQQGK…DDCAVVCLFL (318 aa)). Mn(2+)-binding residues include Asp-103, Gly-104, Asp-329, and Asp-375. Positions 401-431 (HINNGVTEPEPDTASSSTPDSGTGSPELNGV) are disordered. Over residues 412–426 (DTASSSTPDSGTGSP) the composition is skewed to low complexity.

The protein belongs to the PP2C family. Interacts with KIN10. Mg(2+) is required as a cofactor. Mn(2+) serves as cofactor. In terms of tissue distribution, expressed in the whole plant.

It localises to the cell membrane. The enzyme catalyses O-phospho-L-seryl-[protein] + H2O = L-seryl-[protein] + phosphate. The catalysed reaction is O-phospho-L-threonyl-[protein] + H2O = L-threonyl-[protein] + phosphate. Acts as a protein phosphatase. This Arabidopsis thaliana (Mouse-ear cress) protein is Probable protein phosphatase 2C 74.